A 368-amino-acid chain; its full sequence is Peptidoglycan-recognition protein LA (368 aa).

At 1-127 the chain is on the cytoplasmic side; that stretch reads MFEENNSPTT…KSPSRRVTRN (127 aa). Disordered regions lie at residues 21–46 and 101–122; these read QRAS…GLPL and INSN…SPSR. 2 stretches are compositionally biased toward low complexity: residues 33-43 and 102-113; these read TSAGSSTSSSG and NSNNANGNGNAN. A helical membrane pass occupies residues 128 to 148; sequence TILLITLILLVLATGLIVLYV. The Extracellular segment spans residues 149–368; that stretch reads ELNRPKPELP…MKTESWDAKQ (220 aa). A disulfide bridge links Cys221 with Cys227. The 88-residue stretch at 233-320 folds into the N-acetylmuramoyl-L-alanine amidase domain; the sequence is TIQDSAIAEK…DVDYKLVAQN (88 aa). Asn273 and Asn320 each carry an N-linked (GlcNAc...) asparagine glycan.

This sequence belongs to the N-acetylmuramoyl-L-alanine amidase 2 family. As to expression, expressed in uninduced hemocytes and mbn-2 cells.

It is found in the cell membrane. Peptidoglycan-recognition protein probably involved in innate immunity by binding to peptidoglycans (PGN) of bacteria and activating the immune response. This is Peptidoglycan-recognition protein LA (PGRP-LA) from Drosophila melanogaster (Fruit fly).